We begin with the raw amino-acid sequence, 132 residues long: Large ribosomal subunit protein bL17 (132 aa).

This sequence belongs to the bacterial ribosomal protein bL17 family. As to quaternary structure, part of the 50S ribosomal subunit. Contacts protein L32.

In Ehrlichia canis (strain Jake), this protein is Large ribosomal subunit protein bL17.